A 436-amino-acid chain; its full sequence is UPF0597 protein YhaM (436 aa).

Belongs to the UPF0597 family.

This is UPF0597 protein YhaM from Salmonella paratyphi B (strain ATCC BAA-1250 / SPB7).